A 322-amino-acid chain; its full sequence is Glutamyl-Q tRNA(Asp) synthetase (322 aa).

L-glutamate is bound by residues 28 to 32 (RFAPS) and Glu64. Positions 31 to 41 (PSPSGDLHFGS) match the 'HIGH' region motif. Cys120, Cys122, Tyr134, and Cys138 together coordinate Zn(2+). Residues Tyr191 and Arg209 each coordinate L-glutamate. The 'KMSKS' region signature appears at 247–251 (KLSKQ). Residue Lys250 coordinates ATP.

Belongs to the class-I aminoacyl-tRNA synthetase family. GluQ subfamily. Requires Zn(2+) as cofactor.

Its function is as follows. Catalyzes the tRNA-independent activation of glutamate in presence of ATP and the subsequent transfer of glutamate onto a tRNA(Asp). Glutamate is transferred on the 2-amino-5-(4,5-dihydroxy-2-cyclopenten-1-yl) moiety of the queuosine in the wobble position of the QUC anticodon. This Pectobacterium atrosepticum (strain SCRI 1043 / ATCC BAA-672) (Erwinia carotovora subsp. atroseptica) protein is Glutamyl-Q tRNA(Asp) synthetase.